A 95-amino-acid chain; its full sequence is Co-chaperonin GroES (95 aa).

It belongs to the GroES chaperonin family. In terms of assembly, heptamer of 7 subunits arranged in a ring. Interacts with the chaperonin GroEL.

It localises to the cytoplasm. In terms of biological role, together with the chaperonin GroEL, plays an essential role in assisting protein folding. The GroEL-GroES system forms a nano-cage that allows encapsulation of the non-native substrate proteins and provides a physical environment optimized to promote and accelerate protein folding. GroES binds to the apical surface of the GroEL ring, thereby capping the opening of the GroEL channel. The protein is Co-chaperonin GroES of Streptococcus thermophilus (strain ATCC BAA-491 / LMD-9).